We begin with the raw amino-acid sequence, 159 residues long: Large ribosomal subunit protein uL10 (159 aa).

The protein belongs to the universal ribosomal protein uL10 family. In terms of assembly, part of the ribosomal stalk of the 50S ribosomal subunit. The N-terminus interacts with L11 and the large rRNA to form the base of the stalk. The C-terminus forms an elongated spine to which L12 dimers bind in a sequential fashion forming a multimeric L10(L12)X complex.

Functionally, forms part of the ribosomal stalk, playing a central role in the interaction of the ribosome with GTP-bound translation factors. The polypeptide is Large ribosomal subunit protein uL10 (Nautilia profundicola (strain ATCC BAA-1463 / DSM 18972 / AmH)).